A 352-amino-acid polypeptide reads, in one-letter code: Histidine biosynthesis bifunctional protein HisB (352 aa).

A histidinol-phosphatase region spans residues 1–164; it reads MSQKILFIDR…EIENEILSSF (164 aa). The Nucleophile role is filled by Asp-9. Mg(2+) contacts are provided by Asp-9 and Asp-11. Asp-11 acts as the Proton donor in catalysis. 4 residues coordinate Zn(2+): Cys-93, His-95, Cys-101, and Cys-103. A Mg(2+)-binding site is contributed by Asp-130. The segment at 165–352 is imidazoleglycerol-phosphate dehydratase; sequence RSASYQRTTK…ENLASSKGVI (188 aa).

This sequence in the N-terminal section; belongs to the histidinol-phosphatase family. In the C-terminal section; belongs to the imidazoleglycerol-phosphate dehydratase family. It depends on Mg(2+) as a cofactor. Zn(2+) is required as a cofactor.

It is found in the cytoplasm. The catalysed reaction is D-erythro-1-(imidazol-4-yl)glycerol 3-phosphate = 3-(imidazol-4-yl)-2-oxopropyl phosphate + H2O. The enzyme catalyses L-histidinol phosphate + H2O = L-histidinol + phosphate. It participates in amino-acid biosynthesis; L-histidine biosynthesis; L-histidine from 5-phospho-alpha-D-ribose 1-diphosphate: step 6/9. It functions in the pathway amino-acid biosynthesis; L-histidine biosynthesis; L-histidine from 5-phospho-alpha-D-ribose 1-diphosphate: step 8/9. The protein is Histidine biosynthesis bifunctional protein HisB of Campylobacter jejuni subsp. jejuni serotype O:6 (strain 81116 / NCTC 11828).